The primary structure comprises 77 residues: Pi-stichotoxin-Hmg5a (77 aa).

The first 21 residues, Met1–Ala21, serve as a signal peptide directing secretion. The propeptide occupies Leu22–Gln34. 3 cysteine pairs are disulfide-bonded: Cys40–Cys73, Cys42–Cys66, and Cys56–Cys74.

The protein belongs to the sea anemone type 3 (BDS) potassium channel toxin family.

The protein resides in the secreted. It is found in the nematocyst. Its function is as follows. Toxin that inhibits rat ASIC3 channels (IC(50)=13.8 uM). Also able to bind T.californica muscle-type nicotinic acetylcholine receptors (nAChR), and human alpha-7/CHRNA7 nicotinic acetylcholine receptors. The chain is Pi-stichotoxin-Hmg5a from Heteractis magnifica (Magnificent sea anemone).